The primary structure comprises 212 residues: MSTLADLRKNYSLGSLDISDVDPNPFGQFDRWFKQAIDAQLPEPNTMTLATADARGRPSARIVLIKGVDERGFVFFTNYESRKGQELAQNPHASLLFYWIELERQVRIEGTVVKTSPEESDAYFASRPVGSRIGAWASEQSKVIESRAALEAREREFSAQYGENPPRPPHWGGYRLIPDAIEFWQGRPSRLHDRLLYTHSGGAGWTITRLSP.

Substrate-binding positions include 8 to 11 (RKNY) and lysine 66. FMN-binding positions include 61–66 (RIVLIK), 76–77 (FT), arginine 82, lysine 83, and glutamine 105. Substrate is bound by residues tyrosine 123, arginine 127, and serine 131. Residues 140–141 (QS) and tryptophan 184 contribute to the FMN site. 190–192 (RLH) serves as a coordination point for substrate. Position 194 (arginine 194) interacts with FMN.

The protein belongs to the pyridoxamine 5'-phosphate oxidase family. Homodimer. FMN serves as cofactor.

The enzyme catalyses pyridoxamine 5'-phosphate + O2 + H2O = pyridoxal 5'-phosphate + H2O2 + NH4(+). It carries out the reaction pyridoxine 5'-phosphate + O2 = pyridoxal 5'-phosphate + H2O2. It functions in the pathway cofactor metabolism; pyridoxal 5'-phosphate salvage; pyridoxal 5'-phosphate from pyridoxamine 5'-phosphate: step 1/1. It participates in cofactor metabolism; pyridoxal 5'-phosphate salvage; pyridoxal 5'-phosphate from pyridoxine 5'-phosphate: step 1/1. Catalyzes the oxidation of either pyridoxine 5'-phosphate (PNP) or pyridoxamine 5'-phosphate (PMP) into pyridoxal 5'-phosphate (PLP). The protein is Pyridoxine/pyridoxamine 5'-phosphate oxidase of Paraburkholderia phymatum (strain DSM 17167 / CIP 108236 / LMG 21445 / STM815) (Burkholderia phymatum).